Here is a 76-residue protein sequence, read N- to C-terminus: uncharacterized protein (76 aa).

Residues 20-42 (GIVWGPKLAPWGITLGLGAFYFF) form a helical membrane-spanning segment.

Its subcellular location is the membrane. This is an uncharacterized protein from Dictyostelium discoideum (Social amoeba).